The chain runs to 677 residues: UvrABC system protein B (677 aa).

Residues Gln25–Arg412 enclose the Helicase ATP-binding domain. Residue Gly38–Thr45 coordinates ATP. The Beta-hairpin signature appears at Tyr91–Ile114. Positions Gln429–Ala591 constitute a Helicase C-terminal domain. Residues Pro639–Lys674 form the UVR domain.

The protein belongs to the UvrB family. As to quaternary structure, forms a heterotetramer with UvrA during the search for lesions. Interacts with UvrC in an incision complex.

The protein localises to the cytoplasm. In terms of biological role, the UvrABC repair system catalyzes the recognition and processing of DNA lesions. A damage recognition complex composed of 2 UvrA and 2 UvrB subunits scans DNA for abnormalities. Upon binding of the UvrA(2)B(2) complex to a putative damaged site, the DNA wraps around one UvrB monomer. DNA wrap is dependent on ATP binding by UvrB and probably causes local melting of the DNA helix, facilitating insertion of UvrB beta-hairpin between the DNA strands. Then UvrB probes one DNA strand for the presence of a lesion. If a lesion is found the UvrA subunits dissociate and the UvrB-DNA preincision complex is formed. This complex is subsequently bound by UvrC and the second UvrB is released. If no lesion is found, the DNA wraps around the other UvrB subunit that will check the other stand for damage. The sequence is that of UvrABC system protein B from Parasynechococcus marenigrum (strain WH8102).